Consider the following 142-residue polypeptide: Hydrogenase maturation factor HypA (142 aa).

Histidine 2 is a binding site for Ni(2+). Zn(2+)-binding residues include cysteine 73, cysteine 76, cysteine 109, and cysteine 112.

It belongs to the HypA/HybF family.

In terms of biological role, involved in the maturation of [NiFe] hydrogenases. Required for nickel insertion into the metal center of the hydrogenase. This Methanopyrus kandleri (strain AV19 / DSM 6324 / JCM 9639 / NBRC 100938) protein is Hydrogenase maturation factor HypA.